We begin with the raw amino-acid sequence, 171 residues long: MAIETAIFAGGCFWCMVQPFDSLDGIEKVRSGYTGGHVENPTYEQVLTHTTGHTEAVKIWFDSEKISYRELVEIYWEQTDPTDAMGQFQDRGDNYRPVIFVNSPEQREIAEESRAALAASNRFDEPIVTKIEDAKPFYEAEEYHQDFYKKDPEREALEMAQRLQFKADKWN.

Cysteine 12 is a catalytic residue.

Belongs to the MsrA Met sulfoxide reductase family.

The catalysed reaction is L-methionyl-[protein] + [thioredoxin]-disulfide + H2O = L-methionyl-(S)-S-oxide-[protein] + [thioredoxin]-dithiol. The enzyme catalyses [thioredoxin]-disulfide + L-methionine + H2O = L-methionine (S)-S-oxide + [thioredoxin]-dithiol. Functionally, has an important function as a repair enzyme for proteins that have been inactivated by oxidation. Catalyzes the reversible oxidation-reduction of methionine sulfoxide in proteins to methionine. The chain is Peptide methionine sulfoxide reductase MsrA from Leuconostoc mesenteroides subsp. mesenteroides (strain ATCC 8293 / DSM 20343 / BCRC 11652 / CCM 1803 / JCM 6124 / NCDO 523 / NBRC 100496 / NCIMB 8023 / NCTC 12954 / NRRL B-1118 / 37Y).